Consider the following 219-residue polypeptide: Uracil-DNA glycosylase (219 aa).

D63 functions as the Proton acceptor in the catalytic mechanism.

This sequence belongs to the uracil-DNA glycosylase (UDG) superfamily. UNG family.

Its subcellular location is the cytoplasm. It carries out the reaction Hydrolyzes single-stranded DNA or mismatched double-stranded DNA and polynucleotides, releasing free uracil.. Functionally, excises uracil residues from the DNA which can arise as a result of misincorporation of dUMP residues by DNA polymerase or due to deamination of cytosine. This chain is Uracil-DNA glycosylase, found in Mesomycoplasma hyopneumoniae (strain 7448) (Mycoplasma hyopneumoniae).